A 62-amino-acid chain; its full sequence is UPF0434 protein Rleg2_3773 (62 aa).

The protein belongs to the UPF0434 family.

The polypeptide is UPF0434 protein Rleg2_3773 (Rhizobium leguminosarum bv. trifolii (strain WSM2304)).